The sequence spans 492 residues: Ferruginol synthase (492 aa).

Residues 1–21 (MDPFPLVAAALFIAATWFITF) form a helical membrane-spanning segment. Residue cysteine 436 coordinates heme.

It belongs to the cytochrome P450 family. Heme is required as a cofactor. In terms of tissue distribution, expressed in leaf glandular trichomes.

The protein localises to the membrane. It carries out the reaction abieta-8,11,13-triene + reduced [NADPH--hemoprotein reductase] + O2 = ferruginol + oxidized [NADPH--hemoprotein reductase] + H2O + H(+). The enzyme catalyses ferruginol + reduced [NADPH--hemoprotein reductase] + O2 = 11-hydroxyferruginol + oxidized [NADPH--hemoprotein reductase] + H2O + H(+). It catalyses the reaction miltiradiene + 2 reduced [NADPH--hemoprotein reductase] + 2 O2 = 11-oxomiltiradiene + 2 oxidized [NADPH--hemoprotein reductase] + 3 H2O + 2 H(+). It functions in the pathway secondary metabolite biosynthesis; terpenoid biosynthesis. Functionally, monooxygenase involved in the biosynthesis of labdane-related diterpenes natural products. Catalyzes the oxidation of abietatriene to produce ferruginol. Catalyzes the oxidation of ferruginol at C-12 to produce 11-hydroxyferruginol. Ferruginol and 11-hydroxyferruginol are intermediates in the biosynthesis of carnosate, a potent antioxidant. May also convert miltiradiene into 11-oxomiltiradiene. The protein is Ferruginol synthase of Salvia fruticosa (Greek sage).